We begin with the raw amino-acid sequence, 150 residues long: Large ribosomal subunit protein uL22c (150 aa).

This sequence belongs to the universal ribosomal protein uL22 family. Part of the 50S ribosomal subunit.

The protein localises to the plastid. It is found in the chloroplast. This protein binds specifically to 23S rRNA. Its function is as follows. The globular domain of the protein is located near the polypeptide exit tunnel on the outside of the subunit, while an extended beta-hairpin is found that lines the wall of the exit tunnel in the center of the 70S ribosome. The chain is Large ribosomal subunit protein uL22c (rpl22) from Fagopyrum esculentum subsp. ancestrale (Wild buckwheat).